A 341-amino-acid polypeptide reads, in one-letter code: D-erythrose-4-phosphate dehydrogenase (341 aa).

14 to 15 (RI) is a binding site for NAD(+). Substrate-binding positions include 156-158 (SCT), Arg-202, 215-216 (TR), and Arg-238. The Nucleophile role is filled by Cys-157. NAD(+) is bound at residue Asn-320.

This sequence belongs to the glyceraldehyde-3-phosphate dehydrogenase family. Epd subfamily. In terms of assembly, homotetramer.

It is found in the cytoplasm. It catalyses the reaction D-erythrose 4-phosphate + NAD(+) + H2O = 4-phospho-D-erythronate + NADH + 2 H(+). It participates in cofactor biosynthesis; pyridoxine 5'-phosphate biosynthesis; pyridoxine 5'-phosphate from D-erythrose 4-phosphate: step 1/5. Catalyzes the NAD-dependent conversion of D-erythrose 4-phosphate to 4-phosphoerythronate. This is D-erythrose-4-phosphate dehydrogenase from Idiomarina loihiensis (strain ATCC BAA-735 / DSM 15497 / L2-TR).